We begin with the raw amino-acid sequence, 162 residues long: Cyclic pyranopterin monophosphate synthase (162 aa).

Residues 79–81 (LCH) and 117–118 (ME) contribute to the substrate site. Asp-132 is a catalytic residue.

It belongs to the MoaC family. As to quaternary structure, homohexamer; trimer of dimers.

It carries out the reaction (8S)-3',8-cyclo-7,8-dihydroguanosine 5'-triphosphate = cyclic pyranopterin phosphate + diphosphate. It participates in cofactor biosynthesis; molybdopterin biosynthesis. Its function is as follows. Catalyzes the conversion of (8S)-3',8-cyclo-7,8-dihydroguanosine 5'-triphosphate to cyclic pyranopterin monophosphate (cPMP). This Bordetella avium (strain 197N) protein is Cyclic pyranopterin monophosphate synthase.